A 971-amino-acid polypeptide reads, in one-letter code: ATP-dependent helicase NAM7 (971 aa).

The interval 1 to 22 (MVGSGSHTPYDISNSPSDVNVQ) is disordered. The region spanning 54 to 208 (SPSASDNSCA…SKLEAKWRSN (155 aa)) is the Upf1 CH-rich domain. A Phosphoserine modification is found at S56. Residues C62, C65, C76, C79, C84, H94, H98, H104, C122, C125, C148, and C152 each coordinate Zn(2+). The C3H stretch occupies residues 62 to 94 (CAYCGIDSAKCVIKCNSCKKWFCNTKNGTSSSH). The segment at 76 to 104 (CNSCKKWFCNTKNGTSSSHIVNHLVLSHH) is CC/SHH/C. A C4 region spans residues 122-152 (CYNCGRKNVFLLGFVSAKSEAVVVLLCRIPC). Residues Q413, 433-437 (GTGKT), Q601, Y638, and E769 each bind ATP. The residue at position 869 (S869) is a Phosphoserine.

It belongs to the DNA2/NAM7 helicase family.

It localises to the cytoplasm. The enzyme catalyses ATP + H2O = ADP + phosphate + H(+). RNA-dependent helicase required for nonsense-mediated decay (NMD) of aberrant mRNAs containing premature stop codons and modulates the expression level of normal mRNAs. Also capable of unwinding double-stranded DNA and translocating on single-stranded DNA. This chain is ATP-dependent helicase NAM7 (NAM7), found in Saccharomyces cerevisiae (strain ATCC 204508 / S288c) (Baker's yeast).